A 346-amino-acid chain; its full sequence is Dihydroorotate dehydrogenase (quinone) (346 aa).

FMN is bound by residues 62–66 (AGMDK) and T86. K66 contacts substrate. 111–115 (NRMGF) contacts substrate. FMN-binding residues include N142 and N175. Residue N175 coordinates substrate. S178 (nucleophile) is an active-site residue. Substrate is bound at residue N180. 2 residues coordinate FMN: K211 and V239. Residue 240-241 (NT) participates in substrate binding. Residues G261, G289, and 310–311 (YT) each bind FMN.

The protein belongs to the dihydroorotate dehydrogenase family. Type 2 subfamily. Monomer. FMN serves as cofactor.

It is found in the cell membrane. The catalysed reaction is (S)-dihydroorotate + a quinone = orotate + a quinol. It functions in the pathway pyrimidine metabolism; UMP biosynthesis via de novo pathway; orotate from (S)-dihydroorotate (quinone route): step 1/1. In terms of biological role, catalyzes the conversion of dihydroorotate to orotate with quinone as electron acceptor. In Thermus thermophilus (strain ATCC 27634 / DSM 579 / HB8), this protein is Dihydroorotate dehydrogenase (quinone).